Reading from the N-terminus, the 316-residue chain is Adenine deaminase (316 aa).

Zn(2+)-binding residues include H14, H16, and H194. E197 (proton donor) is an active-site residue. Position 275 (D275) interacts with Zn(2+). D276 provides a ligand contact to substrate.

It belongs to the metallo-dependent hydrolases superfamily. Adenosine and AMP deaminases family. Adenine deaminase type 2 subfamily. Zn(2+) is required as a cofactor.

It carries out the reaction adenine + H2O + H(+) = hypoxanthine + NH4(+). Its function is as follows. Catalyzes the hydrolytic deamination of adenine to hypoxanthine. Plays an important role in the purine salvage pathway and in nitrogen catabolism. The sequence is that of Adenine deaminase from Pseudomonas entomophila (strain L48).